We begin with the raw amino-acid sequence, 218 residues long: Stress response regulator protein 1 (218 aa).

Positions 90-209 constitute a Response regulatory domain; sequence RFLLVDDNSI…YRVVLDVVDN (120 aa). Residue Asp-142 is modified to 4-aspartylphosphate.

Its function is as follows. Required for stress adaptation, morphogenesis and virulence. The protein is Stress response regulator protein 1 (SRR1) of Meyerozyma guilliermondii (strain ATCC 6260 / CBS 566 / DSM 6381 / JCM 1539 / NBRC 10279 / NRRL Y-324) (Yeast).